The following is a 121-amino-acid chain: Large ribosomal subunit protein uL24 (121 aa).

The protein belongs to the universal ribosomal protein uL24 family. In terms of assembly, part of the 50S ribosomal subunit.

Functionally, one of two assembly initiator proteins, it binds directly to the 5'-end of the 23S rRNA, where it nucleates assembly of the 50S subunit. Located at the polypeptide exit tunnel on the outside of the subunit. This is Large ribosomal subunit protein uL24 from Pyrococcus abyssi (strain GE5 / Orsay).